Here is an 845-residue protein sequence, read N- to C-terminus: Protein SEY1 (845 aa).

Residues 1–29 are a coiled coil; the sequence is MELNVDSAKQLLAEHEQELQSAHDAHSIL. The Cytoplasmic segment spans residues 1 to 749; that stretch reads MELNVDSAKQ…KRATVSSIAQ (749 aa). Positions 112 to 334 constitute a GB1/RHD3-type G domain; sequence GFGYDLCAVL…DPNFVFKTEY (223 aa). 122–129 provides a ligand contact to GTP; that stretch reads GSQSTGKS. Residues 750 to 770 form a helical membrane-spanning segment; sequence VPLWMYGVMLVLGWNELMAIL. At 771–773 the chain is on the lumenal side; it reads SSP. A helical membrane pass occupies residues 774–794; the sequence is VYFAFLLVLIASAYIVWRLNL. At 795 to 845 the chain is on the cytoplasmic side; that stretch reads SGPLISVLRAVANEVHRLADAQLRTHFSQPLREPRPPAESRPAEQIELEPN. The tract at residues 823-845 is disordered; that stretch reads QPLREPRPPAESRPAEQIELEPN. The span at 826-838 shows a compositional bias: basic and acidic residues; it reads REPRPPAESRPAE.

It belongs to the TRAFAC class dynamin-like GTPase superfamily. GB1/RHD3 GTPase family. RHD3 subfamily.

The protein resides in the endoplasmic reticulum membrane. Functionally, cooperates with the reticulon proteins and tubule-shaping DP1 family proteins to generate and maintain the structure of the tubular endoplasmic reticulum network. Has GTPase activity, which is required for its function in ER organization. This Mycosarcoma maydis (Corn smut fungus) protein is Protein SEY1.